The sequence spans 195 residues: Peptidyl-tRNA hydrolase (195 aa).

Residue Tyr-17 coordinates tRNA. His-22 acts as the Proton acceptor in catalysis. TRNA-binding residues include Phe-68, Asn-70, and Asn-116.

The protein belongs to the PTH family. Monomer.

The protein resides in the cytoplasm. The catalysed reaction is an N-acyl-L-alpha-aminoacyl-tRNA + H2O = an N-acyl-L-amino acid + a tRNA + H(+). Hydrolyzes ribosome-free peptidyl-tRNAs (with 1 or more amino acids incorporated), which drop off the ribosome during protein synthesis, or as a result of ribosome stalling. Functionally, catalyzes the release of premature peptidyl moieties from peptidyl-tRNA molecules trapped in stalled 50S ribosomal subunits, and thus maintains levels of free tRNAs and 50S ribosomes. This Shewanella amazonensis (strain ATCC BAA-1098 / SB2B) protein is Peptidyl-tRNA hydrolase.